The chain runs to 480 residues: UDP-glycosyltransferase 72B2 (480 aa).

Residues Ser277, 347–349 (APQ), 364–372 (HCGWNSTLE), and 386–389 (FAEQ) each bind UDP-alpha-D-glucose.

It belongs to the UDP-glycosyltransferase family.

The protein is UDP-glycosyltransferase 72B2 (UGT72B2) of Arabidopsis thaliana (Mouse-ear cress).